The chain runs to 469 residues: Sulfate adenylyltransferase subunit 1 (469 aa).

A tr-type G domain is found at 22-238; the sequence is KQLLRFITCG…LETIKIDEDR (217 aa). The interval 31-38 is G1; it reads GSVDDGKS. 31–38 is a binding site for GTP; sequence GSVDDGKS. The interval 89 to 93 is G2; that stretch reads GITID. Positions 110–113 are G3; that stretch reads DTPG. Residues 110–114 and 165–168 each bind GTP; these read DTPGH and NKMD. The tract at residues 165–168 is G4; the sequence is NKMD. A G5 region spans residues 203 to 205; it reads SAL.

Belongs to the TRAFAC class translation factor GTPase superfamily. Classic translation factor GTPase family. CysN/NodQ subfamily. Heterodimer composed of CysD, the smaller subunit, and CysN.

The enzyme catalyses sulfate + ATP + H(+) = adenosine 5'-phosphosulfate + diphosphate. Its pathway is sulfur metabolism; hydrogen sulfide biosynthesis; sulfite from sulfate: step 1/3. Functionally, with CysD forms the ATP sulfurylase (ATPS) that catalyzes the adenylation of sulfate producing adenosine 5'-phosphosulfate (APS) and diphosphate, the first enzymatic step in sulfur assimilation pathway. APS synthesis involves the formation of a high-energy phosphoric-sulfuric acid anhydride bond driven by GTP hydrolysis by CysN coupled to ATP hydrolysis by CysD. The protein is Sulfate adenylyltransferase subunit 1 of Aliarcobacter butzleri (strain RM4018) (Arcobacter butzleri).